A 496-amino-acid chain; its full sequence is UDP-N-acetylmuramate--L-alanine ligase (496 aa).

122–128 is an ATP binding site; that stretch reads GTHGKTT.

It belongs to the MurCDEF family.

The protein localises to the cytoplasm. The catalysed reaction is UDP-N-acetyl-alpha-D-muramate + L-alanine + ATP = UDP-N-acetyl-alpha-D-muramoyl-L-alanine + ADP + phosphate + H(+). The protein operates within cell wall biogenesis; peptidoglycan biosynthesis. Its function is as follows. Cell wall formation. This is UDP-N-acetylmuramate--L-alanine ligase from Mycobacterium avium (strain 104).